A 256-amino-acid chain; its full sequence is 5-oxoprolinase subunit A (256 aa).

The protein belongs to the LamB/PxpA family. Forms a complex composed of PxpA, PxpB and PxpC.

The catalysed reaction is 5-oxo-L-proline + ATP + 2 H2O = L-glutamate + ADP + phosphate + H(+). In terms of biological role, catalyzes the cleavage of 5-oxoproline to form L-glutamate coupled to the hydrolysis of ATP to ADP and inorganic phosphate. The chain is 5-oxoprolinase subunit A from Geobacillus thermodenitrificans (strain NG80-2).